Consider the following 403-residue polypeptide: Acetylornithine/succinyldiaminopimelate aminotransferase (403 aa).

Residues glycine 107–alanine 108 and phenylalanine 140 each bind pyridoxal 5'-phosphate. Arginine 143 lines the N(2)-acetyl-L-ornithine pocket. Position 225–228 (aspartate 225–glutamine 228) interacts with pyridoxal 5'-phosphate. At lysine 254 the chain carries N6-(pyridoxal phosphate)lysine. Threonine 282 contributes to the N(2)-acetyl-L-ornithine binding site. Threonine 283 serves as a coordination point for pyridoxal 5'-phosphate.

It belongs to the class-III pyridoxal-phosphate-dependent aminotransferase family. ArgD subfamily. Homodimer. Requires pyridoxal 5'-phosphate as cofactor.

The protein localises to the cytoplasm. The enzyme catalyses N(2)-acetyl-L-ornithine + 2-oxoglutarate = N-acetyl-L-glutamate 5-semialdehyde + L-glutamate. It carries out the reaction N-succinyl-(2S,6S)-2,6-diaminopimelate + 2-oxoglutarate = (S)-2-succinylamino-6-oxoheptanedioate + L-glutamate. It participates in amino-acid biosynthesis; L-arginine biosynthesis; N(2)-acetyl-L-ornithine from L-glutamate: step 4/4. Its pathway is amino-acid biosynthesis; L-lysine biosynthesis via DAP pathway; LL-2,6-diaminopimelate from (S)-tetrahydrodipicolinate (succinylase route): step 2/3. In terms of biological role, involved in both the arginine and lysine biosynthetic pathways. The polypeptide is Acetylornithine/succinyldiaminopimelate aminotransferase (Photorhabdus laumondii subsp. laumondii (strain DSM 15139 / CIP 105565 / TT01) (Photorhabdus luminescens subsp. laumondii)).